Consider the following 63-residue polypeptide: Arabinogalactan peptide 3 (63 aa).

Residues 1–26 (MASRILYAAAVVAAVAVSSLAGVAYA) form the signal peptide. S36 carries the GPI-anchor amidated serine lipid modification. Residues 37–63 (GAAAVSSSLVAAVLCPAVALLLGNLRQ) constitute a propeptide, removed in mature form.

It belongs to the AG-peptide AGP family. Post-translationally, O-glycosylated on hydroxyprolines; noncontiguous hydroxylproline residues are glycosylated with arabinogalactan. As to expression, expressed in roots, stems, leaves, flowers and seeds.

The protein localises to the vacuole. It localises to the aleurone grain membrane. In terms of biological role, proteoglycan that seems to be implicated in diverse developmental roles such as differentiation, cell-cell recognition, embryogenesis and programmed cell death. The chain is Arabinogalactan peptide 3 (AGPEP3) from Oryza sativa subsp. japonica (Rice).